Here is a 247-residue protein sequence, read N- to C-terminus: Proteasome subunit alpha type-7 (247 aa).

Belongs to the peptidase T1A family. As to quaternary structure, the 26S proteasome consists of a 20S proteasome core and two 19S regulatory subunits. The 20S proteasome core is composed of 28 subunits that are arranged in four stacked rings, resulting in a barrel-shaped structure. The two end rings are each formed by seven alpha subunits, and the two central rings are each formed by seven beta subunits. The catalytic chamber with the active sites is on the inside of the barrel.

The protein localises to the cytoplasm. The protein resides in the nucleus. Functionally, the proteasome is a multicatalytic proteinase complex which is characterized by its ability to cleave peptides with Arg, Phe, Tyr, Leu, and Glu adjacent to the leaving group at neutral or slightly basic pH. The proteasome has an ATP-dependent proteolytic activity. This is Proteasome subunit alpha type-7 (PSA4) from Trypanosoma brucei brucei.